Here is a 159-residue protein sequence, read N- to C-terminus: Vesicle transport protein SFT2A (159 aa).

The Cytoplasmic segment spans residues 1–36; it reads MEKLRRVLSGQDDEEQGLTAQVLDASSLSFNTRLKW. S9 is modified (phosphoserine). Residues 37-57 traverse the membrane as a helical segment; that stretch reads FVICFVAGIFFSFLGTGLLWL. At 58–62 the chain is on the lumenal side; it reads PNGMK. The helical transmembrane segment at 63–83 threads the bilayer; sequence LFAVFYTLGNLAALASTCFLM. At 84–97 the chain is on the cytoplasmic side; the sequence is GPVKQLKKMFETTR. A helical membrane pass occupies residues 98-118; the sequence is LLATIIMLLCLVFTLCAALWW. The Lumenal portion of the chain corresponds to 119 to 122; it reads RKKG. Residues 123–143 form a helical membrane-spanning segment; it reads LALLFCILQFLSMTWYSLSYI. Over 144-159 the chain is Cytoplasmic; the sequence is PYARDAVLKCCSSLLG.

It belongs to the SFT2 family.

It is found in the membrane. Functionally, may be involved in fusion of retrograde transport vesicles derived from an endocytic compartment with the Golgi complex. The protein is Vesicle transport protein SFT2A of Mus musculus (Mouse).